The chain runs to 532 residues: Variant surface glycoprotein ILTAT 1.23 (532 aa).

The N-terminal stretch at 1-23 (MFKNINAAVLLLILSTRNDYANA) is a signal peptide. Residue N66 is glycosylated (N-linked (GlcNAc...) asparagine). Disordered regions lie at residues 79–107 (APKK…RNHA) and 408–504 (MQAG…DQDK). N-linked (GlcNAc...) asparagine glycosylation occurs at N419. Over residues 427 to 445 (CKWEEKDGKDGKCVADDSK) the composition is skewed to basic and acidic residues. A compositionally biased stretch (low complexity) spans 450-470 (GNAPAGAGDGTAGTTTTPNCA). Composition is skewed to basic and acidic residues over residues 472-484 (HTDK…ENKG) and 494-504 (KGKEGESDQDK). An N-linked (GlcNAc...) asparagine glycan is attached at N509. N509 carries the GPI-anchor amidated asparagine lipid modification. Positions 510–532 (GSFLAKKKFALSVVSAAFTALLF) are cleaved as a propeptide — removed in mature form.

Its subcellular location is the cell membrane. Its function is as follows. VSG forms a coat on the surface of the parasite. The trypanosome evades the immune response of the host by expressing a series of antigenically distinct VSGs from an estimated 1000 VSG genes. This is Variant surface glycoprotein ILTAT 1.23 from Trypanosoma brucei brucei.